The following is a 206-amino-acid chain: MLMLFLTVAMVHIVALMSPGPDFFFVSQTAVSRSRKEAMMGVLGITCGVMVWAGIALLGLHLIIEKMAWLHTLIMVGGGLYLCWMGYQMLRGALKKEAVSAPAPQVELAKSGRSFLKGLLTNLANPKAIIYFGSVFSLFVGDNVGTTARWGIFALIIVETLAWFTVVASLFALPQMRRGYQRLAKWIDGFAGALFAGFGIHLIISR.

The chain crosses the membrane as a helical span at residues 1–21 (MLMLFLTVAMVHIVALMSPGP). Residues 22–43 (DFFFVSQTAVSRSRKEAMMGVL) lie on the Periplasmic side of the membrane. The chain crosses the membrane as a helical span at residues 44–64 (GITCGVMVWAGIALLGLHLII). Residues 65 to 66 (EK) lie on the Cytoplasmic side of the membrane. Residues 67-87 (MAWLHTLIMVGGGLYLCWMGY) form a helical membrane-spanning segment. Residues 88–149 (QMLRGALKKE…VGDNVGTTAR (62 aa)) lie on the Periplasmic side of the membrane. Residues 150-173 (WGIFALIIVETLAWFTVVASLFAL) form a helical membrane-spanning segment. Residues 174–206 (PQMRRGYQRLAKWIDGFAGALFAGFGIHLIISR) lie on the Cytoplasmic side of the membrane.

The protein belongs to the Rht family.

It is found in the cell inner membrane. Its function is as follows. Conducts the efflux of threonine. This Escherichia coli O157:H7 protein is Threonine efflux protein (rhtC).